The sequence spans 931 residues: Bifunctional uridylyltransferase/uridylyl-removing enzyme (931 aa).

The segment at 1-383 is uridylyltransferase; that stretch reads MDLATTNDAA…RPGTELRRVP (383 aa). The tract at residues 384–739 is uridylyl-removing; the sequence is EGDDFIIDNN…VGFDEARGVT (356 aa). Residues 499-622 enclose the HD domain; it reads VDEHLLRCIG…VQSVEQMKLL (124 aa). 2 ACT domains span residues 740–822 and 851–931; these read ELTI…VVAR and VIEV…QSVG.

This sequence belongs to the GlnD family. Mg(2+) is required as a cofactor.

The enzyme catalyses [protein-PII]-L-tyrosine + UTP = [protein-PII]-uridylyl-L-tyrosine + diphosphate. It catalyses the reaction [protein-PII]-uridylyl-L-tyrosine + H2O = [protein-PII]-L-tyrosine + UMP + H(+). With respect to regulation, uridylyltransferase (UTase) activity is inhibited by glutamine, while glutamine activates uridylyl-removing (UR) activity. Its function is as follows. Modifies, by uridylylation and deuridylylation, the PII regulatory proteins (GlnB and homologs), in response to the nitrogen status of the cell that GlnD senses through the glutamine level. Under low glutamine levels, catalyzes the conversion of the PII proteins and UTP to PII-UMP and PPi, while under higher glutamine levels, GlnD hydrolyzes PII-UMP to PII and UMP (deuridylylation). Thus, controls uridylylation state and activity of the PII proteins, and plays an important role in the regulation of nitrogen assimilation and metabolism. This chain is Bifunctional uridylyltransferase/uridylyl-removing enzyme, found in Nitrobacter hamburgensis (strain DSM 10229 / NCIMB 13809 / X14).